A 463-amino-acid polypeptide reads, in one-letter code: Nitrogenase iron-molybdenum cofactor biosynthesis protein NifE (463 aa).

Belongs to the NifD/NifK/NifE/NifN family.

It functions in the pathway cofactor biosynthesis; Fe-Mo cofactor biosynthesis. Functionally, this protein may play a role in the biosynthesis of the prosthetic group of nitrogenase (FeMo cofactor). The protein is Nitrogenase iron-molybdenum cofactor biosynthesis protein NifE (nifE2) of Methanosarcina barkeri.